Here is a 60-residue protein sequence, read N- to C-terminus: uncharacterized protein (60 aa).

The helical transmembrane segment at 33 to 55 (FRLLRGIFLITLVIWTVVWLKLL) threads the bilayer.

This sequence belongs to the HHV-5 UL2 protein family.

The protein localises to the host membrane. This is an uncharacterized protein from Human cytomegalovirus (strain AD169) (HHV-5).